Here is a 920-residue protein sequence, read N- to C-terminus: Protein translocase subunit SecA 2 (920 aa).

ATP is bound by residues glutamine 91, 109 to 113, and aspartate 527; that span reads GEGKT. Over residues 859 to 870 the composition is skewed to basic and acidic residues; it reads GEGSALDRRPTD. Positions 859–920 are disordered; sequence GEGSALDRRP…KSRNRRRRKR (62 aa). Residues 906-920 are compositionally biased toward basic residues; the sequence is PHRPGKSRNRRRRKR.

It belongs to the SecA family. In terms of assembly, monomer and homodimer. Part of the essential Sec protein translocation apparatus which comprises SecA, SecYEG and auxiliary proteins SecDF. Other proteins may also be involved.

It localises to the cell membrane. The protein localises to the cytoplasm. It catalyses the reaction ATP + H2O + cellular proteinSide 1 = ADP + phosphate + cellular proteinSide 2.. Part of the Sec protein translocase complex. Interacts with the SecYEG preprotein conducting channel. Has a central role in coupling the hydrolysis of ATP to the transfer of proteins into and across the cell membrane, serving as an ATP-driven molecular motor driving the stepwise translocation of polypeptide chains across the membrane. The protein is Protein translocase subunit SecA 2 of Streptomyces avermitilis (strain ATCC 31267 / DSM 46492 / JCM 5070 / NBRC 14893 / NCIMB 12804 / NRRL 8165 / MA-4680).